The primary structure comprises 331 residues: Glyceraldehyde-3-phosphate dehydrogenase (331 aa).

Residues arginine 12–isoleucine 13, aspartate 34, arginine 78, and threonine 120 each bind NAD(+). Residues serine 149–threonine 151, threonine 180, threonine 209–glycine 210, and arginine 232 contribute to the D-glyceraldehyde 3-phosphate site. The active-site Nucleophile is the cysteine 150. Residue asparagine 314 coordinates NAD(+).

The protein belongs to the glyceraldehyde-3-phosphate dehydrogenase family. In terms of assembly, homotetramer.

The protein localises to the cytoplasm. The enzyme catalyses D-glyceraldehyde 3-phosphate + phosphate + NAD(+) = (2R)-3-phospho-glyceroyl phosphate + NADH + H(+). It functions in the pathway carbohydrate degradation; glycolysis; pyruvate from D-glyceraldehyde 3-phosphate: step 1/5. Catalyzes the oxidative phosphorylation of glyceraldehyde 3-phosphate (G3P) to 1,3-bisphosphoglycerate (BPG) using the cofactor NAD. The first reaction step involves the formation of a hemiacetal intermediate between G3P and a cysteine residue, and this hemiacetal intermediate is then oxidized to a thioester, with concomitant reduction of NAD to NADH. The reduced NADH is then exchanged with the second NAD, and the thioester is attacked by a nucleophilic inorganic phosphate to produce BPG. This Escherichia fergusonii (strain ATCC 35469 / DSM 13698 / CCUG 18766 / IAM 14443 / JCM 21226 / LMG 7866 / NBRC 102419 / NCTC 12128 / CDC 0568-73) protein is Glyceraldehyde-3-phosphate dehydrogenase (gapA).